Here is a 317-residue protein sequence, read N- to C-terminus: Acetyl-coenzyme A carboxylase carboxyl transferase subunit alpha (317 aa).

The 256-residue stretch at 37–292 (QISQKLEDTK…EEYILKAFNE (256 aa)) folds into the CoA carboxyltransferase C-terminal domain.

This sequence belongs to the AccA family. As to quaternary structure, acetyl-CoA carboxylase is a heterohexamer composed of biotin carboxyl carrier protein (AccB), biotin carboxylase (AccC) and two subunits each of ACCase subunit alpha (AccA) and ACCase subunit beta (AccD).

The protein localises to the cytoplasm. It carries out the reaction N(6)-carboxybiotinyl-L-lysyl-[protein] + acetyl-CoA = N(6)-biotinyl-L-lysyl-[protein] + malonyl-CoA. Its pathway is lipid metabolism; malonyl-CoA biosynthesis; malonyl-CoA from acetyl-CoA: step 1/1. Functionally, component of the acetyl coenzyme A carboxylase (ACC) complex. First, biotin carboxylase catalyzes the carboxylation of biotin on its carrier protein (BCCP) and then the CO(2) group is transferred by the carboxyltransferase to acetyl-CoA to form malonyl-CoA. This chain is Acetyl-coenzyme A carboxylase carboxyl transferase subunit alpha, found in Flavobacterium psychrophilum (strain ATCC 49511 / DSM 21280 / CIP 103535 / JIP02/86).